The chain runs to 684 residues: Pre-mRNA-splicing factor CLF1 (684 aa).

14 HAT repeats span residues 43-75 (DWQR…FEFD), 77-109 (KDIR…SEIK), 111-143 (KNIN…LEES), 145-176 (GNQG…FETR), 178-209 (LNFE…FEQT), 211-251 (GDIS…WEAS), 253-285 (GEYE…FEKK), 295-327 (IVIA…LVEE), 332-364 (QLTS…ICVR), 374-410 (NDLP…FEIR), 412-443 (NNLL…LEIR), 445-477 (KEFD…LEEN), 518-550 (AEYE…FEST), and 584-622 (ENKH…YEKV).

This sequence belongs to the crooked-neck family. In terms of assembly, associated with the spliceosome.

It is found in the nucleus. In terms of biological role, involved in pre-mRNA splicing and cell cycle progression. Required for the spliceosome assembly and initiation of the DNA replication. The chain is Pre-mRNA-splicing factor CLF1 (CLF1) from Kluyveromyces lactis (strain ATCC 8585 / CBS 2359 / DSM 70799 / NBRC 1267 / NRRL Y-1140 / WM37) (Yeast).